The sequence spans 1711 residues: MKAVYREMCPNCWGRISDERLVMRNPCEECLDEPVHADSYFQLVSAVRNALKLRGTLKEWEKIYQLENQTREIEEFFKKATGFTFWSAQRTWVKRLLKGRSFSIIAPTGMGKSTFGAFMAVWHALKGKKSYIVVPTTPLVIQTVRKIEGIMENANADVRLAYYHGNLRKKEKEEMLERIKNEDYDILVTSAQWLARNYEEVLKGRHFDFIFVDDVDAFLKASKNIDRSLYLLGFTDEIIQKAWEIIRLKKQMSRYLNGNSEDRNEKLNGLNREIEKLQREIEKFKRKNKIGIMIIASATGSARGDRIKLYRELLGFEVGSGRSALRNVVDSYLKPTKDIKEHVEELLTRLGKGGLIFVPVDQGLGYAEELANYLSEKGFKIELVSSKNKKALEKFENGEADYLIGSATYYGSLVRGIDLPHLIRYAVFTGVPKFRFSIDLERPTIYRALGLLSEIMDFLSEEDRRQAEKLHARLRRLIRNIPQFELLKIEEALAEGLPIENEFHNHVLGVFRELVEFLRRVLRDEEVLRKLAEDPFISLVKEEGKWYIEIPDVRTYIQATGRTSRLFAGGITKGLSVLIVDNEKVFNGLVRQMRWRFQEFKMVPFEELDLDEILRQIDEDREKVRLVMEGKISAKVKDLVRSALMIVESPNKARTIANFFGQPSKTRIGDLVAYEISVGDRMLTILASGGHMFDLVTNEGYHGVLIQNEGDMLKFIPVYDTLKRCRDCGHQFVDWEKKGVCPRCGSTNVRDALENVIAMREIAQEVDEILIATDPDTEGEKIAWDIRNVLAPYTPNIKRIEFHEVTRPAIMKAIQEARDVNENRVNAQIVRRIEDRWIGFELSQELQRVFESYNLSAGRVQTPVLGWIIERYKEFTESEVYFLGLTLENGLQVTIELGKDGKDVEPPEYVTVEEVQLEERELNPAPPYTTDAMLKDASTFLKLSAPETMRLAQDLFEAGLCVTPDTLVSLADGRIMEIKDAVEKSEGNLLSVNGLKPKEAKALKFWEIDWNGPLKVIKLKNGHEIKATPDHGLLVMREGKLGWVSAKNVREGDYVAFAYNTGHRGRDEYTLLKLMIKLGITDVMVELDEEYFNEKVAPIVRERISTSTKYKYLRRRVLPLYLLQEWGLDDYEAHVKSLYRQRAGSKPIPNFKLDGRFWYVFGLVLGDGTLRDSKVLISQTPLKDVKSVLEDVFPFLRVFETTNQVGFSNSIIAEVFRRLGARKGKLHPLVFGLREEYINAMIAGYFDTDGTFSILNDRKGPNFRGILTSKRGDVLRMLSVYLYQIGIMNYLRRDERTGVWDLIISNRSLEKFREKIYPYLRIRRAQFDEAYSVYRASRRAFEGDLLPVAPVFGKLKFKNGTKNRILKETGIDVWNWLKRPEGEIPRDKLSKVLEYAEESPEKEFLKSLVEAGVTWVKVKGVEEELYTGKLYDFTTTTENFLSNGAVSHNCTYHRTDSTHVSNTGIEVAKEYITQELGEKYFKPRPWGEEGAHEAIRPTRPIDTGRLMQLIRDGIIQLPRNLTRNHYRLYDMIFRRFMTSQMTPAKILYEKAVINAGVGKAELEGYVEIIEDGWTRLRSPPLRELPKLEKGMKLKVVEAKKWKAPKVSLYTQGDIIALMKERKIGRPSTYAKIVETLMRRGYVVETKGRKKLLPTEKGIKVYHYLVSKYRDLVSEERTRELEEIMDRIEEGIEDYIKVLGELYSEIQRYVSG.

The RG N-terminal-type zinc-finger motif lies at 1–39; it reads MKAVYREMCPNCWGRISDERLVMRNPCEECLDEPVHADS. The Zn(2+) site is built by Cys9, Cys12, Cys27, and Cys30. Residues Gln89 and 106 to 113 contribute to the ATP site; that span reads APTGMGKS. Positions 93–256 constitute a Helicase ATP-binding domain; the sequence is VKRLLKGRSF…RLKKQMSRYL (164 aa). The DEAD box motif lies at 213-216; it reads DDVD. A topoisomerase I region spans residues 638-1711; sequence DLVRSALMIV…YSEIQRYVSG (1074 aa). Positions 642 to 805 constitute a Toprim domain; the sequence is SALMIVESPN…NIKRIEFHEV (164 aa). Glu648 contacts Mg(2+). The segment at 722–751 adopts an RG C-terminal-type zinc-finger fold; the sequence is LKRCRDCGHQFVDWEKKGVCPRCGSTNVRD. 4 residues coordinate Zn(2+): Cys725, Cys728, Cys741, and Cys744. Asp774 is a Mg(2+) binding site. One can recognise a Topo IA-type catalytic domain in the interval 821–1709; that stretch reads NENRVNAQIV…ELYSEIQRYV (889 aa). Residues 1160 to 1287 form the DOD-type homing endonuclease domain; sequence VFGLVLGDGT…LSVYLYQIGI (128 aa). Catalysis depends on Tyr1452, which acts as the O-(5'-phospho-DNA)-tyrosine intermediate.

The protein in the N-terminal section; belongs to the DEAD box helicase family. DDVD subfamily. This sequence in the C-terminal section; belongs to the type IA topoisomerase family. As to quaternary structure, monomer. The cofactor is Zn(2+). Mg(2+) serves as cofactor. Post-translationally, this protein undergoes a protein self splicing that involves a post-translational excision of the intervening region (intein) followed by peptide ligation.

The protein resides in the cytoplasm. It carries out the reaction ATP + H2O = ADP + phosphate + H(+). Modifies the topological state of DNA by introducing positive supercoils in an ATP-dependent process, increasing the linking number in steps of +1. Binds to single-stranded DNA, transiently cleaves and then rejoins the ends, introducing a positive supercoil in the process. The scissile phosphodiester is attacked by the catalytic tyrosine of the enzyme, resulting in the formation of a DNA-(5'-phosphotyrosyl)-enzyme intermediate. Probably involved in rewinding DNA strands in regions of the chromosome that have opened up to allow replication, transcription, DNA repair and/or for DNA protection. This chain is Reverse gyrase, found in Thermococcus kodakarensis (strain ATCC BAA-918 / JCM 12380 / KOD1) (Pyrococcus kodakaraensis (strain KOD1)).